The sequence spans 499 residues: Dual specificity protein kinase CLK2 (499 aa).

Positions 1–65 (MPHPRRYHSS…RSSYDDHSSD (65 aa)) are disordered. Residues 8–23 (HSSERGSRGSYHEHYQ) show a composition bias toward basic and acidic residues. The span at 24 to 33 (SRKHKRRRSR) shows a compositional bias: basic residues. Phosphoserine; by PKB/AKT1 is present on Ser-34. Residues 47-65 (REDSYHVRSRSSYDDHSSD) show a composition bias toward basic and acidic residues. Position 98 is a phosphoserine; by autocatalysis (Ser-98). Tyr-99 bears the Phosphotyrosine; by autocatalysis mark. The segment at 102–142 (HRENSSYRSQRSSRRKHRRRRRRSRTFSRSSSHSSRRAKSV) is disordered. Positions 112–127 (RSSRRKHRRRRRRSRT) are enriched in basic residues. Thr-127 bears the Phosphothreonine; by PKB/AKT1 mark. Phosphoserine; by autocatalysis is present on Ser-141. At Tyr-152 the chain carries Phosphotyrosine. One can recognise a Protein kinase domain in the interval 163 to 479 (EIVSTLGEGT…GEALQHPFFA (317 aa)). Residues 168–176 (LGEGTFGRV) and Lys-192 each bind ATP. Residue Asp-289 is the Proton acceptor of the active site. A Phosphothreonine; by PKB/AKT2 modification is found at Thr-343.

Belongs to the protein kinase superfamily. CMGC Ser/Thr protein kinase family. Lammer subfamily. In terms of assembly, interacts with RBMX and UBL5. Interacts with AKT1. Autophosphorylates on all three types of residues. Phosphorylation on Ser-34 and Thr-127 by AKT1 is induced by ionizing radiation or insulin. Phosphorylation plays a critical role in cell proliferation following low dose radiation and prevents cell death following high dose radiation. Phosphorylation at Thr-343 by PKB/AKT2 induces its kinase activity which is required for its stability. The phosphorylation status at Ser-141 influences its subnuclear localization; inhibition of phosphorylation at Ser-141 results in accumulation in the nuclear speckle.

The protein resides in the nucleus. It localises to the nucleus speckle. The enzyme catalyses L-seryl-[protein] + ATP = O-phospho-L-seryl-[protein] + ADP + H(+). The catalysed reaction is L-threonyl-[protein] + ATP = O-phospho-L-threonyl-[protein] + ADP + H(+). It carries out the reaction L-tyrosyl-[protein] + ATP = O-phospho-L-tyrosyl-[protein] + ADP + H(+). With respect to regulation, 5,6-dichloro-1-b-D-ribofuranosylbenzimidazole (DRB) inhibits autophosphorylation. TG003 inhibits its kinase activity and affects the regulation of alternative splicing mediated by phosphorylation of SR proteins. Dual specificity kinase acting on both serine/threonine and tyrosine-containing substrates. Phosphorylates serine- and arginine-rich (SR) proteins of the spliceosomal complex. May be a constituent of a network of regulatory mechanisms that enable SR proteins to control RNA splicing and can cause redistribution of SR proteins from speckles to a diffuse nucleoplasmic distribution. Acts as a suppressor of hepatic gluconeogenesis and glucose output by repressing PPARGC1A transcriptional activity on gluconeogenic genes via its phosphorylation. Phosphorylates PPP2R5B thereby stimulating the assembly of PP2A phosphatase with the PPP2R5B-AKT1 complex leading to dephosphorylation of AKT1. Phosphorylates: PTPN1, SRSF1 and SRSF3. Regulates the alternative splicing of tissue factor (F3) pre-mRNA in endothelial cells. Phosphorylates PAGE4 at several serine and threonine residues and this phosphorylation attenuates the ability of PAGE4 to potentiate the transcriptional activator activity of JUN. The chain is Dual specificity protein kinase CLK2 (Clk2) from Mus musculus (Mouse).